The sequence spans 239 residues: tRNA (guanine-N(1)-)-methyltransferase (239 aa).

S-adenosyl-L-methionine contacts are provided by residues G113 and 133 to 138 (IGDYVL). The tract at residues 218 to 239 (ERRPDLWAARATQNPPERKTNG) is disordered.

The protein belongs to the RNA methyltransferase TrmD family. As to quaternary structure, homodimer.

The protein localises to the cytoplasm. It catalyses the reaction guanosine(37) in tRNA + S-adenosyl-L-methionine = N(1)-methylguanosine(37) in tRNA + S-adenosyl-L-homocysteine + H(+). Its function is as follows. Specifically methylates guanosine-37 in various tRNAs. The chain is tRNA (guanine-N(1)-)-methyltransferase from Nitrobacter winogradskyi (strain ATCC 25391 / DSM 10237 / CIP 104748 / NCIMB 11846 / Nb-255).